The chain runs to 142 residues: Large ribosomal subunit protein uL11 (142 aa).

This sequence belongs to the universal ribosomal protein uL11 family. In terms of assembly, part of the ribosomal stalk of the 50S ribosomal subunit. Interacts with L10 and the large rRNA to form the base of the stalk. L10 forms an elongated spine to which L12 dimers bind in a sequential fashion forming a multimeric L10(L12)X complex. One or more lysine residues are methylated.

In terms of biological role, forms part of the ribosomal stalk which helps the ribosome interact with GTP-bound translation factors. This is Large ribosomal subunit protein uL11 from Serratia proteamaculans (strain 568).